The chain runs to 377 residues: UPF0754 membrane protein LMHCC_0318 (377 aa).

Helical transmembrane passes span 1–21 (MSVLFTILLMAVIGGFIGAMT) and 357–377 (YLGGILGGFIGVIQGILAMWI).

The protein belongs to the UPF0754 family.

Its subcellular location is the cell membrane. This Listeria monocytogenes serotype 4a (strain HCC23) protein is UPF0754 membrane protein LMHCC_0318.